We begin with the raw amino-acid sequence, 514 residues long: Exoglucanase 1 (514 aa).

The first 17 residues, 1 to 17 (MYRKLAVISAFLATARA), serve as a signal peptide directing secretion. Q18 is modified (pyrrolidone carboxylic acid). The tract at residues 18-453 (QSACTLQSET…GSTGNPSGGN (436 aa)) is catalytic. 10 cysteine pairs are disulfide-bonded: C21/C89, C36/C42, C67/C88, C78/C84, C155/C414, C189/C227, C193/C226, C247/C273, C255/C260, and C278/C348. The N-linked (GlcNAc) asparagine glycan is linked to N62. The active-site Nucleophile is the E229. E234 serves as the catalytic Proton donor/acceptor. The N-linked (GlcNAc...) (high mannose) asparagine glycan is linked to N287. A glycan (N-linked (GlcNAc) asparagine) is linked at N401. Polar residues predominate over residues 401–437 (NETSSTPGAVRGSCSTSSGVPAQVESQSPNAKVTFSN). The tract at residues 401–481 (NETSSTPGAV…TGSSPGPTQS (81 aa)) is disordered. The segment at 454–478 (PPGGNPPGTTTTRRPATTTGSSPGP) is linker. The span at 460 to 479 (PGTTTTRRPATTTGSSPGPT) shows a compositional bias: low complexity. O-linked (Man) threonine glycosylation is present at T462. T463, T464, and T465 each carry an O-linked (Man...) threonine glycan. T470 carries an O-linked (Man) threonine glycan. T471 and T472 each carry an O-linked (Man...) threonine glycan. S474 and S475 each carry an O-linked (Man) serine glycan. One can recognise a CBM1 domain in the interval 478–514 (PTQSHYGQCGGIGYSGPTVCASGTTCQVLNPYYSQCL). Residue T479 is glycosylated (O-linked (Man) threonine). S481 and S492 each carry an O-linked (Man) serine glycan. Intrachain disulfides connect C486–C503 and C497–C513.

Belongs to the glycosyl hydrolase 7 (cellulase C) family. Post-translationally, N-glycosylated. A high mannose glycan is attached to Asn-287 (predominantly Man(8)GlcNAc(2)) and single GlcNAc occupancy is observed at Asn-62 and Asn-401 with some site heterogeneity depending on strains and fermentation conditions. In terms of processing, O-glycosylated. Within the linker domain, all 8 threonines are variably glycosylated with between at least one, and up to three, mannose residues per site. All serines in this domain are at least partially glycosylated with a single mannose residue. O-glycosylation of the cellulase linker provides protection from proteolysis. Linker glycans also contribute to binding affinity of cellobiohydrolases to cellulose.

The protein localises to the secreted. It catalyses the reaction Hydrolysis of (1-&gt;4)-beta-D-glucosidic linkages in cellulose and cellotetraose, releasing cellobiose from the non-reducing ends of the chains.. Functionally, exocellobiohydrolases (CBH) that catalyzes the hydrolysis of 1,4-beta-D-glucosidic bonds in cellulose to release the disaccharide cellobiose. The degradation of cellulose involves an interplay between different cellulolytic enzymes. Hydrolysis starts with endoglucanases (EGs), which cut internal beta-1,4-glucosidic bonds in cellulose to reduce the polymerization degree of the substrate and create new chain ends for exocellobiohydrolases (CBHs). The CBHs release the disaccharide cellobiose from the non-reducing end of the cellulose polymer chain. Finally, beta-1,4-glucosidases hydrolyze the cellobiose and other short cello-oligosaccharides into glucose units. This is Exoglucanase 1 (cbh1) from Hypocrea jecorina (strain ATCC 56765 / BCRC 32924 / NRRL 11460 / Rut C-30) (Trichoderma reesei).